Consider the following 456-residue polypeptide: Bifunctional protein GlmU (456 aa).

The pyrophosphorylase stretch occupies residues 1 to 228 (MPQNTLNTVI…SHLAAGVNNK (228 aa)). Residues 11–14 (LAAG), Lys25, Gln75, 80–81 (GT), 102–104 (YGD), Gly138, Glu153, Asn168, and Asn226 contribute to the UDP-N-acetyl-alpha-D-glucosamine site. Residue Asp104 participates in Mg(2+) binding. A Mg(2+)-binding site is contributed by Asn226. The linker stretch occupies residues 229–249 (RQLAELERIFQTEQAQELLKA). The interval 250-456 (GVTLRDPARF…GWVRPEKNKQ (207 aa)) is N-acetyltransferase. 2 residues coordinate UDP-N-acetyl-alpha-D-glucosamine: Arg332 and Lys350. His362 serves as the catalytic Proton acceptor. Residues Tyr365 and Asn376 each coordinate UDP-N-acetyl-alpha-D-glucosamine. Residues Ala379, 385-386 (NY), Ser404, Ala422, and Arg439 contribute to the acetyl-CoA site.

This sequence in the N-terminal section; belongs to the N-acetylglucosamine-1-phosphate uridyltransferase family. In the C-terminal section; belongs to the transferase hexapeptide repeat family. Homotrimer. It depends on Mg(2+) as a cofactor.

The protein resides in the cytoplasm. It carries out the reaction alpha-D-glucosamine 1-phosphate + acetyl-CoA = N-acetyl-alpha-D-glucosamine 1-phosphate + CoA + H(+). The enzyme catalyses N-acetyl-alpha-D-glucosamine 1-phosphate + UTP + H(+) = UDP-N-acetyl-alpha-D-glucosamine + diphosphate. Its pathway is nucleotide-sugar biosynthesis; UDP-N-acetyl-alpha-D-glucosamine biosynthesis; N-acetyl-alpha-D-glucosamine 1-phosphate from alpha-D-glucosamine 6-phosphate (route II): step 2/2. It participates in nucleotide-sugar biosynthesis; UDP-N-acetyl-alpha-D-glucosamine biosynthesis; UDP-N-acetyl-alpha-D-glucosamine from N-acetyl-alpha-D-glucosamine 1-phosphate: step 1/1. The protein operates within bacterial outer membrane biogenesis; LPS lipid A biosynthesis. Functionally, catalyzes the last two sequential reactions in the de novo biosynthetic pathway for UDP-N-acetylglucosamine (UDP-GlcNAc). The C-terminal domain catalyzes the transfer of acetyl group from acetyl coenzyme A to glucosamine-1-phosphate (GlcN-1-P) to produce N-acetylglucosamine-1-phosphate (GlcNAc-1-P), which is converted into UDP-GlcNAc by the transfer of uridine 5-monophosphate (from uridine 5-triphosphate), a reaction catalyzed by the N-terminal domain. The polypeptide is Bifunctional protein GlmU (Neisseria gonorrhoeae).